The following is an 84-amino-acid chain: uncharacterized protein (84 aa).

In terms of biological role, this protein may be involved in virus assembly. This is an uncharacterized protein from Saccharolobus solfataricus (Sulfolobus solfataricus).